Consider the following 860-residue polypeptide: DNA mismatch repair protein MutS (860 aa).

618–625 (GPNMGGKS) contributes to the ATP binding site.

Belongs to the DNA mismatch repair MutS family.

Functionally, this protein is involved in the repair of mismatches in DNA. It is possible that it carries out the mismatch recognition step. This protein has a weak ATPase activity. This chain is DNA mismatch repair protein MutS, found in Shewanella piezotolerans (strain WP3 / JCM 13877).